The sequence spans 776 residues: MKREMKAPTTPLESLQGDLKGKQGRTSGPARRSTKGQWTPEEDEVLCKAVERFQGKNWKKIAECFKDRTDVQCLHRWQKVLNPELVKGPWSKEEDNTIIDLVEKYGPKKWSTISQHLPGRIGKQCRERWHNHLNPGINKNAWTQEEELTLIRAHQIYGNKWAELMKFLPGRSDNSIKNHWNSSVKKKLDSYYASGLLDQCQSSPLIALQNKSIASSSSWMHSNGDEGSSRPGVDAEESECSQASTVFSQSTNDLQDEVQRGNEEYYMPEFHSGTEQQISNAASHAEPYYPSFKDVKIVVPEISCETECSKKFQNLNCSHELRTTTATEDQLPGVSNDAKQDRGLELLTHNMDNGGKNQALQQDFQSSVRLSDQPFLSNSDTDPEAQTLITDEECCRVLFPDNMKDSSTSSGEQGRNMVDPQNGKGSLCSQAAETHAHETGKVPALPWHPSSSEGLAGHNCVPLLDSDLKDSLLPRNDSNAPIQGCRLFGATELECKTDTNDGFIDTYGHVTSHGNDDNGGFPEQQGLSYIPKDSLKLVPLNSFSSPSRVNKIYFPIDDKPAEKDKGALCYEPPRFPSADIPFFSCDLVPSNSDLRQEYSPFGIRQLMISSMNCTTPLRLWDSPCHDRSPDVMLNDTAKSFSGAPSILKKRHRDLLSPVLDRRKDKKLKRAATSSLANDFSRLDVMLDEGDDCMTSRPSESPEDKNICASPSIARDNRNCASARLYQEMIPIDEEPKETLESGGVTSMQNENGCNDGGASAKNVSPSLSLHIIWYQL.

The interval 1-41 (MKREMKAPTTPLESLQGDLKGKQGRTSGPARRSTKGQWTPE) is disordered. 3 consecutive HTH myb-type domains span residues 30–81 (ARRS…QKVL), 82–137 (NPEL…NPGI), and 138–188 (NKNA…KKKL). 3 DNA-binding regions (H-T-H motif) span residues 58–81 (WKKIAECFKDRTDVQCLHRWQKVL), 110–133 (WSTISQHLPGRIGKQCRERWHNHL), and 161–184 (WAELMKFLPGRSDNSIKNHWNSSV). Disordered stretches follow at residues 217 to 253 (SSWMHSNGDEGSSRPGVDAEESECSQASTVFSQSTND), 364 to 384 (FQSSVRLSDQPFLSNSDTDPE), and 401 to 435 (DNMKDSSTSSGEQGRNMVDPQNGKGSLCSQAAETH). Composition is skewed to polar residues over residues 240–253 (CSQASTVFSQSTND), 364–380 (FQSSVRLSDQPFLSNSD), and 423–432 (GKGSLCSQAA). The Nuclear localization signal motif lies at 648–655 (KKRHRDLL).

As to quaternary structure, component of a DREAM-like complex which modulates a variety of developmentally regulated genes and of the mitotic genes in proliferating and differentiated cells. As to expression, expressed ubiquitously at low levels. Expressed in roots, cotyledons, flowers and leaves, especially in vascular tissues.

The protein resides in the nucleus. Transcription factor that binds 5'-AACGG-3' motifs in gene promoters. Transcription activator involved in the regulation of cytokinesis, probably via the activation of several G2/M phase-specific genes transcription (e.g. KNOLLE). Transcription repressor that regulates organ growth. Binds to the promoters of G2/M-specific genes and to E2F target genes to prevent their expression in post-mitotic cells and to restrict the time window of their expression in proliferating cells. Required for the maintenance of diploidy. In Arabidopsis thaliana (Mouse-ear cress), this protein is Transcription factor MYB3R-1.